A 343-amino-acid polypeptide reads, in one-letter code: L-threonine 3-dehydrogenase (343 aa).

Cys38 provides a ligand contact to Zn(2+). Catalysis depends on charge relay system residues Thr40 and His43. 6 residues coordinate Zn(2+): His63, Glu64, Cys93, Cys96, Cys99, and Cys107. Residues Ile175, Asp195, Arg200, 262-264 (LGL), and 286-287 (IY) each bind NAD(+).

This sequence belongs to the zinc-containing alcohol dehydrogenase family. In terms of assembly, homotetramer. Zn(2+) serves as cofactor.

The protein localises to the cytoplasm. It catalyses the reaction L-threonine + NAD(+) = (2S)-2-amino-3-oxobutanoate + NADH + H(+). It participates in amino-acid degradation; L-threonine degradation via oxydo-reductase pathway; glycine from L-threonine: step 1/2. Its function is as follows. Catalyzes the NAD(+)-dependent oxidation of L-threonine to 2-amino-3-ketobutyrate. In Saccharopolyspora erythraea (strain ATCC 11635 / DSM 40517 / JCM 4748 / NBRC 13426 / NCIMB 8594 / NRRL 2338), this protein is L-threonine 3-dehydrogenase.